The primary structure comprises 356 residues: UDP-N-acetylglucosamine--N-acetylmuramyl-(pentapeptide) pyrophosphoryl-undecaprenol N-acetylglucosamine transferase (356 aa).

Residues 12-14, Asn-124, Arg-163, Ser-188, Ile-242, and Gln-287 each bind UDP-N-acetyl-alpha-D-glucosamine; that span reads TGG.

It belongs to the glycosyltransferase 28 family. MurG subfamily.

It is found in the cell inner membrane. It carries out the reaction di-trans,octa-cis-undecaprenyl diphospho-N-acetyl-alpha-D-muramoyl-L-alanyl-D-glutamyl-meso-2,6-diaminopimeloyl-D-alanyl-D-alanine + UDP-N-acetyl-alpha-D-glucosamine = di-trans,octa-cis-undecaprenyl diphospho-[N-acetyl-alpha-D-glucosaminyl-(1-&gt;4)]-N-acetyl-alpha-D-muramoyl-L-alanyl-D-glutamyl-meso-2,6-diaminopimeloyl-D-alanyl-D-alanine + UDP + H(+). It functions in the pathway cell wall biogenesis; peptidoglycan biosynthesis. Its function is as follows. Cell wall formation. Catalyzes the transfer of a GlcNAc subunit on undecaprenyl-pyrophosphoryl-MurNAc-pentapeptide (lipid intermediate I) to form undecaprenyl-pyrophosphoryl-MurNAc-(pentapeptide)GlcNAc (lipid intermediate II). The protein is UDP-N-acetylglucosamine--N-acetylmuramyl-(pentapeptide) pyrophosphoryl-undecaprenol N-acetylglucosamine transferase of Pseudomonas fluorescens (strain Pf0-1).